Here is a 181-residue protein sequence, read N- to C-terminus: UPF0398 protein lmo1889 (181 aa).

It belongs to the UPF0398 family.

The polypeptide is UPF0398 protein lmo1889 (Listeria monocytogenes serovar 1/2a (strain ATCC BAA-679 / EGD-e)).